Reading from the N-terminus, the 286-residue chain is MLRIKALAPLQTRVSCWLLVLQRGHRLASIKHVCQLSERKRQSLLYPFSDLEGHLFSQVNQAQFKIFHPSLEELRQAETLFTPSSKHVINYSTSAVRMDHVPILKQPEVCFMGRSNVGKSSLIRALFSLAPEVEVRVSKTPGHTKKLNFFTVGKAFTLVDMPGYGHMAPQDFVEMVEPYLQERHNLARTFLLVDASAGLQSTDLVAVEMFEEFNLPYVLVVTKIDRTRQGALLALALELQDFIKKQTTACFPQPFLVSSVQFSGIHLLRCFIAHVTGKQLLSAKQS.

The EngB-type G domain occupies Lys-105–Lys-278. Residues Gly-113 to Ser-120, Gly-142 to Lys-146, Asp-160 to Gly-163, Thr-222 to Asp-225, and Val-257 to Ser-259 each bind GTP. Mg(2+) contacts are provided by Ser-120 and Thr-144.

It belongs to the TRAFAC class TrmE-Era-EngA-EngB-Septin-like GTPase superfamily. EngB GTPase family. Mg(2+) is required as a cofactor.

This Danio rerio (Zebrafish) protein is GTP-binding protein 8 (gtpbp8).